Reading from the N-terminus, the 159-residue chain is Large ribosomal subunit protein uL15 (159 aa).

Residues A14 to A44 are disordered. Gly residues predominate over residues R23 to N35.

The protein belongs to the universal ribosomal protein uL15 family. In terms of assembly, part of the 50S ribosomal subunit.

Functionally, binds to the 23S rRNA. The protein is Large ribosomal subunit protein uL15 of Solidesulfovibrio magneticus (strain ATCC 700980 / DSM 13731 / RS-1) (Desulfovibrio magneticus).